A 256-amino-acid chain; its full sequence is Thyroid transcription factor 1-associated protein 26 homolog (256 aa).

Disordered regions lie at residues 1–35 and 72–190; these read MAPF…AKRK and RKER…KQEY. The segment covering 89-104 has biased composition (basic and acidic residues); sequence YPEHLKHLYLAERERL. The span at 136 to 185 shows a compositional bias: polar residues; it reads LGSSSSEKNITNTSTDQTIAPASSNEPAQPESSHKTTFFQRKQNISSYQK.

This sequence belongs to the TAP26 family.

The sequence is that of Thyroid transcription factor 1-associated protein 26 homolog (ccdc59) from Danio rerio (Zebrafish).